Here is a 40-residue protein sequence, read N- to C-terminus: Natriuretic peptide PpNP-b (40 aa).

Residues 1–8 constitute a propeptide that is removed on maturation; that stretch reads SGSKTANI. C12 and C28 form a disulfide bridge. The tract at residues 20–40 is disordered; that stretch reads IGTTSGMGCGRPRPKPTPGGS.

The protein belongs to the natriuretic peptide family. Expressed by the venom gland.

It localises to the secreted. Functionally, snake venom natriuretic peptide that targets both NPR1 and NPR2. Exhibits hypotensive and vasodepressor activities. This is Natriuretic peptide PpNP-b from Pseudechis porphyriacus (Red-bellied black snake).